The chain runs to 76 residues: Small ribosomal subunit protein bS18 (76 aa).

This sequence belongs to the bacterial ribosomal protein bS18 family. Part of the 30S ribosomal subunit. Forms a tight heterodimer with protein bS6.

Functionally, binds as a heterodimer with protein bS6 to the central domain of the 16S rRNA, where it helps stabilize the platform of the 30S subunit. This Xylella fastidiosa (strain 9a5c) protein is Small ribosomal subunit protein bS18.